The sequence spans 456 residues: uncharacterized protein (456 aa).

The 59-residue stretch at 3-61 folds into the TRAM domain; the sequence is TIKKNEVKTGKVIDLTHEGHGVVKVDRYPIFIPNALIDEEIKFKLIKVKKNFAIGKLIE. [4Fe-4S] cluster is bound by residues Cys74, Cys80, Cys83, and Cys162. Gln286, Tyr315, Glu336, and Asp384 together coordinate S-adenosyl-L-methionine. The active-site Nucleophile is Cys411.

The protein belongs to the class I-like SAM-binding methyltransferase superfamily. RNA M5U methyltransferase family.

This is an uncharacterized protein from Staphylococcus epidermidis (strain ATCC 35984 / DSM 28319 / BCRC 17069 / CCUG 31568 / BM 3577 / RP62A).